Here is a 408-residue protein sequence, read N- to C-terminus: PCI domain-containing protein 2 (408 aa).

A2 is modified (N-acetylalanine). Residue S45 is modified to Phosphoserine. Residues 210–400 enclose the PCI domain; sequence VTYRYYVGRK…QKLVVSKQNP (191 aa).

The protein belongs to the CSN12 family. Component of the nuclear pore complex (NPC)-associated TREX-2 complex (transcription and export complex 2), composed of at least GANP, 2 copies of ENY2, PCID2, SEM1/DSS1, and either centrin CETN2 or centrin CETN3. The TREX-2 complex also associates with ALYREF/ALY and with the nucleoporin NUP153. Interacts with BRCA2. Interacts with SRCAP chromatin remodeling complex component ZNHIT1; the interaction results in inhibition of SRCAP complex activity, preventing the deposition of histone variant H2AZ1/H2A.Z to lymphoid fate regulator genes and restricting lymphoid lineage commitment.

The protein localises to the cytoplasm. It localises to the nucleus. The protein resides in the nuclear pore complex. In terms of biological role, required for B-cell survival through the regulation of the expression of cell-cycle checkpoint MAD2L1 protein during B cell differentiation. As a component of the TREX-2 complex, involved in the export of mRNAs to the cytoplasm through the nuclear pores. Binds and stabilizes BRCA2 and is thus involved in the control of R-loop-associated DNA damage and transcription-associated genomic instability. Blocks the activity of the SRCAP chromatin remodeling complex by interacting with SRCAP complex member ZNHIT1 and inhibiting its interaction with the complex. This prevents the deposition of histone variant H2AZ1/H2A.Z at the nucleosomes of key lymphoid fate regulator genes which suppresses their expression and restricts lymphoid lineage commitment. This chain is PCI domain-containing protein 2 (PCID2), found in Bos taurus (Bovine).